Reading from the N-terminus, the 415-residue chain is Histidine--tRNA ligase (415 aa).

It belongs to the class-II aminoacyl-tRNA synthetase family. As to quaternary structure, homodimer.

The protein resides in the cytoplasm. It catalyses the reaction tRNA(His) + L-histidine + ATP = L-histidyl-tRNA(His) + AMP + diphosphate + H(+). The sequence is that of Histidine--tRNA ligase from Idiomarina loihiensis (strain ATCC BAA-735 / DSM 15497 / L2-TR).